Reading from the N-terminus, the 334-residue chain is MSLDINQIALHQLIKRDEQNLELILRDSLLEPGNTVTEMMAELHRVYSAKSKAYGLFNEESELAEALRQCRRGDEDFLAFSRAATGRLRDELAKYPFAEGGIVLFCHYRYLAVEYLLVAVLNNLSSMRVNEQLDISTTHYLDINHADIVARIDLTEWETNPESTRYLTFLKGRVGRKVADFFMDFLGASVGLDTKAQNRGLLQALDDFTAEAQLDKAERQNVRAQVYSYCNEQLQAGEEIALSELSKELPSFGEKSFQEFTAEQGYELEETFPADRSTLRQLTKYAGSGGGLTINFDAMLLGERIFWDPATDTLTIKGTPPNLRDQLQRRTSGK.

The protein belongs to the YejK family.

It localises to the cytoplasm. It is found in the nucleoid. The polypeptide is Nucleoid-associated protein ESA_01050 (Cronobacter sakazakii (strain ATCC BAA-894) (Enterobacter sakazakii)).